The primary structure comprises 147 residues: Hemoglobin subunit gamma (147 aa).

The region spanning 3–147 (NFTAEDKAAI…VASALASRYH (145 aa)) is the Globin domain. Residues His64 and His93 each contribute to the heme b site.

Belongs to the globin family. As to quaternary structure, heterotetramer of two alpha chains and two gamma chains in fetal hemoglobin (Hb F). As to expression, red blood cells.

Functionally, gamma chains make up the fetal hemoglobin F, in combination with alpha chains. This chain is Hemoglobin subunit gamma (HBG), found in Alouatta belzebul (Red-handed howler monkey).